We begin with the raw amino-acid sequence, 161 residues long: Large ribosomal subunit protein uL15 (161 aa).

The interval 1-47 is disordered; sequence MKLHELHDNPGANRKKKRVARGPGSGKGKTAGRGIKGQTSRSGVALN. The segment covering 23 to 35 has biased composition (gly residues); that stretch reads PGSGKGKTAGRGI.

This sequence belongs to the universal ribosomal protein uL15 family. As to quaternary structure, part of the 50S ribosomal subunit.

Its function is as follows. Binds to the 23S rRNA. This is Large ribosomal subunit protein uL15 from Paracoccus denitrificans (strain Pd 1222).